Here is a 473-residue protein sequence, read N- to C-terminus: ATP synthase subunit beta (473 aa).

153 to 160 (GGAGVGKT) provides a ligand contact to ATP.

The protein belongs to the ATPase alpha/beta chains family. F-type ATPases have 2 components, CF(1) - the catalytic core - and CF(0) - the membrane proton channel. CF(1) has five subunits: alpha(3), beta(3), gamma(1), delta(1), epsilon(1). CF(0) has three main subunits: a(1), b(2) and c(9-12). The alpha and beta chains form an alternating ring which encloses part of the gamma chain. CF(1) is attached to CF(0) by a central stalk formed by the gamma and epsilon chains, while a peripheral stalk is formed by the delta and b chains.

It is found in the cell inner membrane. The catalysed reaction is ATP + H2O + 4 H(+)(in) = ADP + phosphate + 5 H(+)(out). Produces ATP from ADP in the presence of a proton gradient across the membrane. The catalytic sites are hosted primarily by the beta subunits. The protein is ATP synthase subunit beta of Rickettsia canadensis (strain McKiel).